Here is a 455-residue protein sequence, read N- to C-terminus: UDP-N-acetylmuramoyl-tripeptide--D-alanyl-D-alanine ligase (455 aa).

107–113 contributes to the ATP binding site; the sequence is GSCGKTS.

The protein belongs to the MurCDEF family. MurF subfamily.

It localises to the cytoplasm. It catalyses the reaction D-alanyl-D-alanine + UDP-N-acetyl-alpha-D-muramoyl-L-alanyl-gamma-D-glutamyl-meso-2,6-diaminopimelate + ATP = UDP-N-acetyl-alpha-D-muramoyl-L-alanyl-gamma-D-glutamyl-meso-2,6-diaminopimeloyl-D-alanyl-D-alanine + ADP + phosphate + H(+). Its pathway is cell wall biogenesis; peptidoglycan biosynthesis. In terms of biological role, involved in cell wall formation. Catalyzes the final step in the synthesis of UDP-N-acetylmuramoyl-pentapeptide, the precursor of murein. The protein is UDP-N-acetylmuramoyl-tripeptide--D-alanyl-D-alanine ligase of Buchnera aphidicola subsp. Acyrthosiphon pisum (strain APS) (Acyrthosiphon pisum symbiotic bacterium).